A 101-amino-acid polypeptide reads, in one-letter code: Ubiquitin-related modifier 1 (101 aa).

At glycine 101 the chain carries 1-thioglycine. A Glycyl lysine isopeptide (Gly-Lys) (interchain with K-? in acceptor proteins) cross-link involves residue glycine 101.

The protein belongs to the URM1 family. As to quaternary structure, component of a complex at least composed of URM1, CTU2/NCS2 and CTU1/ATPBD3. Post-translationally, C-terminal thiocarboxylation occurs in 2 steps, it is first acyl-adenylated (-COAMP) via the hesA/moeB/thiF part of MOCS3, then thiocarboxylated (-COSH) via the rhodanese domain of MOCS3.

Its subcellular location is the cytoplasm. It participates in tRNA modification; 5-methoxycarbonylmethyl-2-thiouridine-tRNA biosynthesis. Acts as a sulfur carrier required for 2-thiolation of mcm(5)S(2)U at tRNA wobble positions of cytosolic tRNA(Lys), tRNA(Glu) and tRNA(Gln). Serves as sulfur donor in tRNA 2-thiolation reaction by being thiocarboxylated (-COSH) at its C-terminus by MOCS3. The sulfur is then transferred to tRNA to form 2-thiolation of mcm(5)S(2)U. Also acts as a ubiquitin-like protein (UBL) that is covalently conjugated via an isopeptide bond to lysine residues of target proteins such as MOCS3, ATPBD3, CTU2, USP15 and CAS. The thiocarboxylated form serves as substrate for conjugation and oxidative stress specifically induces the formation of UBL-protein conjugates. In Homo sapiens (Human), this protein is Ubiquitin-related modifier 1.